Consider the following 350-residue polypeptide: Probable V-type proton ATPase subunit d 2 (350 aa).

This sequence belongs to the V-ATPase V0D/AC39 subunit family. V-ATPase is a heteromultimeric enzyme made up of two complexes: the ATP-hydrolytic V1 complex and the proton translocation V0 complex. The V1 complex consists of three catalytic AB heterodimers that form a heterohexamer, three peripheral stalks each consisting of EG heterodimers, one central rotor including subunits D and F, and the regulatory subunits C and H. The proton translocation complex V0 consists of the proton transport subunit a, a ring of proteolipid subunits c9c'', rotary subunit d, subunits e and f, and the accessory subunits VhaAC45 and ATP6AP2.

In terms of biological role, subunit of the V0 complex of vacuolar(H+)-ATPase (V-ATPase), a multisubunit enzyme composed of a peripheral complex (V1) that hydrolyzes ATP and a membrane integral complex (V0) that translocates protons. V-ATPase is responsible for acidifying and maintaining the pH of intracellular compartments and in some cell types, is targeted to the plasma membrane, where it is responsible for acidifying the extracellular environment. May play a role in coupling of proton transport and ATP hydrolysis. The sequence is that of Probable V-type proton ATPase subunit d 2 (VhaAC39-2) from Drosophila melanogaster (Fruit fly).